The primary structure comprises 309 residues: Protoheme IX farnesyltransferase (309 aa).

9 helical membrane-spanning segments follow: residues 35-55 (IGIV…AFYF), 64-84 (LHLV…SCAI), 114-134 (VLWL…MTTV), 135-155 (TAAV…TLWT), 161-181 (INTV…WTAV), 187-207 (IVPL…FLAL), 231-251 (MTKR…FYLF), 253-273 (LGVP…LLGL), and 289-309 (FVYS…ATLW).

Belongs to the UbiA prenyltransferase family. Protoheme IX farnesyltransferase subfamily. As to quaternary structure, interacts with CtaA.

Its subcellular location is the cell membrane. The catalysed reaction is heme b + (2E,6E)-farnesyl diphosphate + H2O = Fe(II)-heme o + diphosphate. It functions in the pathway porphyrin-containing compound metabolism; heme O biosynthesis; heme O from protoheme: step 1/1. Functionally, converts heme B (protoheme IX) to heme O by substitution of the vinyl group on carbon 2 of heme B porphyrin ring with a hydroxyethyl farnesyl side group. This chain is Protoheme IX farnesyltransferase, found in Geobacillus kaustophilus (strain HTA426).